The sequence spans 271 residues: 4-hydroxy-tetrahydrodipicolinate reductase (271 aa).

NAD(+) is bound by residues 10–15 (GAGGRM), Glu36, 100–102 (GTT), and 124–127 (SGNM). His157 serves as the catalytic Proton donor/acceptor. His158 lines the (S)-2,3,4,5-tetrahydrodipicolinate pocket. Lys161 functions as the Proton donor in the catalytic mechanism. Position 167–168 (167–168 (GT)) interacts with (S)-2,3,4,5-tetrahydrodipicolinate.

Belongs to the DapB family.

The protein localises to the cytoplasm. It catalyses the reaction (S)-2,3,4,5-tetrahydrodipicolinate + NAD(+) + H2O = (2S,4S)-4-hydroxy-2,3,4,5-tetrahydrodipicolinate + NADH + H(+). It carries out the reaction (S)-2,3,4,5-tetrahydrodipicolinate + NADP(+) + H2O = (2S,4S)-4-hydroxy-2,3,4,5-tetrahydrodipicolinate + NADPH + H(+). It participates in amino-acid biosynthesis; L-lysine biosynthesis via DAP pathway; (S)-tetrahydrodipicolinate from L-aspartate: step 4/4. In terms of biological role, catalyzes the conversion of 4-hydroxy-tetrahydrodipicolinate (HTPA) to tetrahydrodipicolinate. The sequence is that of 4-hydroxy-tetrahydrodipicolinate reductase from Bradyrhizobium diazoefficiens (strain JCM 10833 / BCRC 13528 / IAM 13628 / NBRC 14792 / USDA 110).